The primary structure comprises 322 residues: Protein-L-isoaspartate O-methyltransferase (322 aa).

Residues 1–101 (MSGERAKRFP…AKQGDRSAAP (101 aa)) are disordered. Positions 14–29 (EDLKREPRKPEGRVAE) are enriched in basic and acidic residues. 2 stretches are compositionally biased toward low complexity: residues 33–51 (AGDAARQRLTAAAAVPAAA) and 67–91 (AANPARAKQHAPAAPGAAKRAPQGG). The active site involves Ser-170.

This sequence belongs to the methyltransferase superfamily. L-isoaspartyl/D-aspartyl protein methyltransferase family.

The protein resides in the cytoplasm. It catalyses the reaction [protein]-L-isoaspartate + S-adenosyl-L-methionine = [protein]-L-isoaspartate alpha-methyl ester + S-adenosyl-L-homocysteine. Functionally, catalyzes the methyl esterification of L-isoaspartyl residues in peptides and proteins that result from spontaneous decomposition of normal L-aspartyl and L-asparaginyl residues. It plays a role in the repair and/or degradation of damaged proteins. The sequence is that of Protein-L-isoaspartate O-methyltransferase from Burkholderia pseudomallei (strain 668).